We begin with the raw amino-acid sequence, 721 residues long: Angiomotin-like 2a (721 aa).

The interval 35 to 84 is disordered; that stretch reads QQALRGGSSGGGAGSPRSSLESLTQEESLSPQLSARQEPQGQEHQGDFQH. Residues 49–68 show a composition bias toward low complexity; it reads SPRSSLESLTQEESLSPQLS. Tyr103 bears the Phosphotyrosine; by FGFR1 mark. A disordered region spans residues 169 to 214; the sequence is DNIPMSSSHSYPQLSNNHSDTVVNEQSVHQPDQRGPPPEYPFMVRS. Residues 172–198 are compositionally biased toward polar residues; sequence PMSSSHSYPQLSNNHSDTVVNEQSVHQ. The stretch at 275–531 forms a coiled coil; sequence ANNFQMEQLI…TRWEQKYLEE (257 aa). A compositionally biased stretch (polar residues) spans 554 to 567; it reads INHSPRNSPNSSFN. 2 disordered regions span residues 554–575 and 666–709; these read INHS…SPNH and DSST…TQIS. The segment covering 688–702 has biased composition (low complexity); it reads SAPEPSTASSSESTS. The PDZ-binding signature appears at 718-721; that stretch reads EILI.

The protein belongs to the angiomotin family. Interacts with SRC. In terms of processing, phosphorylation at Tyr-103 is necessary for efficient binding to SRC and synergistically functioning with SRC to activate the downstream MAPK pathway. As to expression, expressed in endothelial cells.

The protein localises to the recycling endosome. It localises to the cytoplasm. The protein resides in the cell projection. It is found in the podosome. Its subcellular location is the cell junction. Required for proper architecture of actin filaments and for cell movements during embryogenesis. Plays a role in the radial actin fiber architecture in skin epithelial cells, thereby maintains cell geometry, size and cell interconnectivity within the skin. Plays an important role in coupling actin fibers to cell junctions in endothelial cells and is therefore required for correct endothelial cell morphology and maintenance of dorsal aorta lumen expansion during embryogenesis. May further play a role in the polarity, proliferation and migration of endothelial cells, and therefore participates in angiogenesis. Inhibits the Wnt/beta-catenin signaling pathway, probably by recruiting CTNNB1 to recycling endosomes and hence preventing its translocation to the nucleus. Regulates the translocation of phosphorylated SRC to peripheral cell-matrix adhesion sites. Selectively promotes FGF-induced MAPK activation through SRC. The chain is Angiomotin-like 2a (amotl2a) from Danio rerio (Zebrafish).